Consider the following 386-residue polypeptide: NADH-ubiquinone oxidoreductase 49 kDa subunit homolog (386 aa).

Belongs to the complex I 49 kDa subunit family.

The protein localises to the mitochondrion. It carries out the reaction a ubiquinone + NADH + 5 H(+)(in) = a ubiquinol + NAD(+) + 4 H(+)(out). Core subunit of the mitochondrial membrane respiratory chain NADH dehydrogenase (Complex I) that is believed to belong to the minimal assembly required for catalysis. Complex I functions in the transfer of electrons from NADH to the respiratory chain. The immediate electron acceptor for the enzyme is believed to be ubiquinone. Component of the iron-sulfur (IP) fragment of the enzyme. Component of the iron-sulfur (IP) fragment of the enzyme. The sequence is that of NADH-ubiquinone oxidoreductase 49 kDa subunit homolog (NAD7) from Trypanosoma brucei brucei.